Consider the following 239-residue polypeptide: LexA repressor (239 aa).

Residues 26–46 (FDEMKDALDLASKSGIHRLIT) constitute a DNA-binding region (H-T-H motif). Catalysis depends on for autocatalytic cleavage activity residues S159 and K197.

The protein belongs to the peptidase S24 family. In terms of assembly, homodimer.

It catalyses the reaction Hydrolysis of Ala-|-Gly bond in repressor LexA.. Its function is as follows. Represses a number of genes involved in the response to DNA damage (SOS response), including recA and lexA. In the presence of single-stranded DNA, RecA interacts with LexA causing an autocatalytic cleavage which disrupts the DNA-binding part of LexA, leading to derepression of the SOS regulon and eventually DNA repair. The sequence is that of LexA repressor from Allorhizobium ampelinum (strain ATCC BAA-846 / DSM 112012 / S4) (Agrobacterium vitis (strain S4)).